The following is a 334-amino-acid chain: Malate dehydrogenase (334 aa).

16–22 contacts NAD(+); the sequence is GAAGQIA. Arg97 and Arg103 together coordinate substrate. NAD(+) contacts are provided by residues Asn110, Gln117, and 134 to 136; that span reads VGN. Residues Asn136 and Arg167 each coordinate substrate. The Proton acceptor role is filled by His192.

It belongs to the LDH/MDH superfamily. MDH type 2 family.

The catalysed reaction is (S)-malate + NAD(+) = oxaloacetate + NADH + H(+). Catalyzes the reversible oxidation of malate to oxaloacetate. In Nocardia farcinica (strain IFM 10152), this protein is Malate dehydrogenase.